The chain runs to 507 residues: ATP synthase subunit alpha, mitochondrial (507 aa).

ATP is bound at residue 171–178; the sequence is GDRQTGKT.

It belongs to the ATPase alpha/beta chains family. In terms of assembly, F-type ATPases have 2 components, CF(1) - the catalytic core - and CF(0) - the membrane proton channel. CF(1) has five subunits: alpha(3), beta(3), gamma(1), delta(1), epsilon(1). CF(0) has three main subunits: a, b and c.

The protein resides in the mitochondrion. It localises to the mitochondrion inner membrane. Functionally, mitochondrial membrane ATP synthase (F(1)F(0) ATP synthase or Complex V) produces ATP from ADP in the presence of a proton gradient across the membrane which is generated by electron transport complexes of the respiratory chain. F-type ATPases consist of two structural domains, F(1) - containing the extramembraneous catalytic core, and F(0) - containing the membrane proton channel, linked together by a central stalk and a peripheral stalk. During catalysis, ATP synthesis in the catalytic domain of F(1) is coupled via a rotary mechanism of the central stalk subunits to proton translocation. Subunits alpha and beta form the catalytic core in F(1). Rotation of the central stalk against the surrounding alpha(3)beta(3) subunits leads to hydrolysis of ATP in three separate catalytic sites on the beta subunits. Subunit alpha does not bear the catalytic high-affinity ATP-binding sites. This chain is ATP synthase subunit alpha, mitochondrial (ATPA), found in Raphanus sativus (Radish).